A 386-amino-acid chain; its full sequence is uncharacterized protein (386 aa).

Residues 29–76 (KYWKFLNEDCKIEVLKYLDYCSRCQLSICSKSDHKLVSITPLYVYEIE) form the F-box domain.

This is an uncharacterized protein from Caenorhabditis elegans.